The chain runs to 588 residues: L-fucose isomerase (588 aa).

Active-site proton acceptor residues include Glu-335 and Asp-359. Residues Glu-335, Asp-359, and His-525 each contribute to the Mn(2+) site.

It belongs to the L-fucose isomerase family. Mn(2+) serves as cofactor.

The protein resides in the cytoplasm. It carries out the reaction L-fucose = L-fuculose. It participates in carbohydrate degradation; L-fucose degradation; L-lactaldehyde and glycerone phosphate from L-fucose: step 1/3. Converts the aldose L-fucose into the corresponding ketose L-fuculose. The protein is L-fucose isomerase of Streptococcus pneumoniae (strain JJA).